The following is a 1006-amino-acid chain: uncharacterized protein (1006 aa).

The disordered stretch occupies residues 326–371 (EMEKKRPRSPELVPKKIVMEKERPSSPDSEAEEREHNLRIEKERHQ). 2 stretches are compositionally biased toward basic and acidic residues: residues 338-350 (VPKK…ERPS) and 358-371 (EREH…ERHQ). 2 coiled-coil regions span residues 358–473 (EREH…ARLA) and 756–782 (EVQK…AFGR).

This is an uncharacterized protein from Caenorhabditis elegans.